Here is a 33-residue protein sequence, read N- to C-terminus: Photosystem II reaction center protein Psb30 (33 aa).

The chain crosses the membrane as a helical span at residues 5–25 (VIAQLTVLALIVISGPLVIAL).

This sequence belongs to the Psb30/Ycf12 family. As to quaternary structure, PSII is composed of 1 copy each of membrane proteins PsbA, PsbB, PsbC, PsbD, PsbE, PsbF, PsbH, PsbI, PsbJ, PsbK, PsbL, PsbM, PsbT, PsbX, PsbY, PsbZ, Psb30/Ycf12, peripheral proteins of the oxygen-evolving complex and a large number of cofactors. It forms dimeric complexes.

It localises to the plastid. Its subcellular location is the chloroplast thylakoid membrane. A core subunit of photosystem II (PSII), probably helps stabilize the reaction center. The polypeptide is Photosystem II reaction center protein Psb30 (Huperzia lucidula (Shining clubmoss)).